A 387-amino-acid polypeptide reads, in one-letter code: Alanine racemase (387 aa).

Catalysis depends on Lys-48, which acts as the Proton acceptor; specific for D-alanine. Lys-48 is modified (N6-(pyridoxal phosphate)lysine). A substrate-binding site is contributed by Arg-146. Catalysis depends on Tyr-267, which acts as the Proton acceptor; specific for L-alanine. Met-315 serves as a coordination point for substrate.

This sequence belongs to the alanine racemase family. Pyridoxal 5'-phosphate is required as a cofactor.

The enzyme catalyses L-alanine = D-alanine. It functions in the pathway amino-acid biosynthesis; D-alanine biosynthesis; D-alanine from L-alanine: step 1/1. Functionally, catalyzes the interconversion of L-alanine and D-alanine. May also act on other amino acids. The sequence is that of Alanine racemase (alr) from Methylacidiphilum infernorum (isolate V4) (Methylokorus infernorum (strain V4)).